The primary structure comprises 87 residues: Small ribosomal subunit protein bS20 (87 aa).

The disordered stretch occupies residues 1–22 (MAHHKSAIKRIKQNAKKNARNR).

Belongs to the bacterial ribosomal protein bS20 family.

Its function is as follows. Binds directly to 16S ribosomal RNA. This is Small ribosomal subunit protein bS20 from Pelobacter propionicus (strain DSM 2379 / NBRC 103807 / OttBd1).